A 128-amino-acid polypeptide reads, in one-letter code: Probable heavy metal-dependent transcriptional regulator HI_0293 (128 aa).

The HTH merR-type domain maps to 1–69 (MNISEAAKLV…LHQIAQLLAL (69 aa)). The H-T-H motif DNA-binding region spans 4-23 (SEAAKLVGLSTKQIRDYEKM).

The protein resides in the cytoplasm. Functionally, could be a copper-dependent transcriptional activator of the ATPase HI_0290. The protein is Probable heavy metal-dependent transcriptional regulator HI_0293 of Haemophilus influenzae (strain ATCC 51907 / DSM 11121 / KW20 / Rd).